A 162-amino-acid chain; its full sequence is Caveolin-2 (162 aa).

Topologically, residues 1–86 (MGLETEKADV…FEISKYVMYK (86 aa)) are cytoplasmic. A Phosphotyrosine modification is found at tyrosine 19. A phosphoserine mark is found at serine 20 and serine 36. The helical intramembrane region spans 87-107 (FLTVFLAIPLAFVAGILFATL). The Cytoplasmic segment spans residues 108–162 (SCLHIWIIMPFVKTCLMVLPSVQTIWKSVTDVIIAPLCTSVGRSFSSISLQLSHD).

It belongs to the caveolin family. Homodimer. Caveolin-1 and -2 colocalize and form a stable hetero-oligomeric complex.

The protein localises to the golgi apparatus membrane. It localises to the cell membrane. The protein resides in the membrane. Its subcellular location is the caveola. Its function is as follows. May act as a scaffolding protein within caveolar membranes. Interacts directly with G-protein alpha subunits and can functionally regulate their activity. Caveolin-2 may function as an accessory protein in conjunction with caveolin-1. This chain is Caveolin-2 (CAV2), found in Microcebus murinus (Gray mouse lemur).